The chain runs to 1358 residues: DNA-directed RNA polymerase subunit beta (1358 aa).

The protein belongs to the RNA polymerase beta chain family. As to quaternary structure, the RNAP catalytic core consists of 2 alpha, 1 beta, 1 beta' and 1 omega subunit. When a sigma factor is associated with the core the holoenzyme is formed, which can initiate transcription.

It catalyses the reaction RNA(n) + a ribonucleoside 5'-triphosphate = RNA(n+1) + diphosphate. DNA-dependent RNA polymerase catalyzes the transcription of DNA into RNA using the four ribonucleoside triphosphates as substrates. The sequence is that of DNA-directed RNA polymerase subunit beta from Azotobacter vinelandii (strain DJ / ATCC BAA-1303).